Here is a 217-residue protein sequence, read N- to C-terminus: Pyridoxine/pyridoxamine 5'-phosphate oxidase (217 aa).

Substrate-binding positions include 13-16 (RRDY) and Lys71. FMN-binding positions include 66–71 (RIVLLK), 81–82 (YT), Lys88, and Gln110. Substrate-binding residues include Tyr128, Arg132, and Ser136. FMN is bound by residues 145–146 (QS) and Trp190. 196 to 198 (RLH) contributes to the substrate binding site. Arg200 lines the FMN pocket.

This sequence belongs to the pyridoxamine 5'-phosphate oxidase family. In terms of assembly, homodimer. It depends on FMN as a cofactor.

It carries out the reaction pyridoxamine 5'-phosphate + O2 + H2O = pyridoxal 5'-phosphate + H2O2 + NH4(+). The catalysed reaction is pyridoxine 5'-phosphate + O2 = pyridoxal 5'-phosphate + H2O2. It participates in cofactor metabolism; pyridoxal 5'-phosphate salvage; pyridoxal 5'-phosphate from pyridoxamine 5'-phosphate: step 1/1. Its pathway is cofactor metabolism; pyridoxal 5'-phosphate salvage; pyridoxal 5'-phosphate from pyridoxine 5'-phosphate: step 1/1. Its function is as follows. Catalyzes the oxidation of either pyridoxine 5'-phosphate (PNP) or pyridoxamine 5'-phosphate (PMP) into pyridoxal 5'-phosphate (PLP). The polypeptide is Pyridoxine/pyridoxamine 5'-phosphate oxidase (Edwardsiella ictaluri (strain 93-146)).